The following is a 264-amino-acid chain: uncharacterized protein (264 aa).

Polar residues-rich tracts occupy residues 1 to 18 (MFEN…SSRS), 73 to 83 (SLGSVGTTEVN), and 126 to 139 (KTTQ…QPVL). 2 disordered regions span residues 1-47 (MFEN…WVGS) and 68-264 (RKEP…LSFE). A compositionally biased stretch (low complexity) spans 149-171 (SSGQPQVSSSAQPSPADASQPEA). The segment covering 194–212 (LIHKDGQDDPKLKVTECRR) has biased composition (basic and acidic residues). Phosphoserine is present on residues Ser214, Ser215, Ser241, and Ser250.

This is an uncharacterized protein from Bos taurus (Bovine).